Consider the following 310-residue polypeptide: Methionyl-tRNA formyltransferase (310 aa).

109 to 112 (SLLP) contacts (6S)-5,6,7,8-tetrahydrofolate. A disordered region spans residues 283–310 (QPQGKKAMPAADWARGARIGDGERFGDD). Residues 300–310 (RIGDGERFGDD) show a composition bias toward basic and acidic residues.

The protein belongs to the Fmt family.

It carries out the reaction L-methionyl-tRNA(fMet) + (6R)-10-formyltetrahydrofolate = N-formyl-L-methionyl-tRNA(fMet) + (6S)-5,6,7,8-tetrahydrofolate + H(+). Attaches a formyl group to the free amino group of methionyl-tRNA(fMet). The formyl group appears to play a dual role in the initiator identity of N-formylmethionyl-tRNA by promoting its recognition by IF2 and preventing the misappropriation of this tRNA by the elongation apparatus. In Thermobifida fusca (strain YX), this protein is Methionyl-tRNA formyltransferase.